The sequence spans 114 residues: UPF0473 protein OEOE_1164 (114 aa).

It belongs to the UPF0473 family.

The chain is UPF0473 protein OEOE_1164 from Oenococcus oeni (strain ATCC BAA-331 / PSU-1).